The sequence spans 487 residues: Putative B3 domain-containing protein At1g78640 (487 aa).

2 consecutive DNA-binding regions (TF-B3) follow at residues R171–T269 and R379–V474.

It localises to the nucleus. The polypeptide is Putative B3 domain-containing protein At1g78640 (Arabidopsis thaliana (Mouse-ear cress)).